Here is a 443-residue protein sequence, read N- to C-terminus: Omega-6 fatty acid desaturase, chloroplastic (443 aa).

A chloroplast-targeting transit peptide spans 1–64 (MASRIADSLF…AKKRIGCIKA (64 aa)). Residues 166 to 170 (HDCAH) carry the Histidine box-1 motif. The Histidine box-2 motif lies at 202–206 (HDRHH). Positions 362–366 (HIPHH) match the Histidine box-3 motif.

Belongs to the fatty acid desaturase type 1 family.

It localises to the plastid. It is found in the chloroplast membrane. It carries out the reaction a (9Z)-octadecenoyl-containing glycerolipid + 2 reduced [2Fe-2S]-[ferredoxin] + O2 + 2 H(+) = a (9Z,12Z)-octadecadienoyl-containing glycerolipid + 2 oxidized [2Fe-2S]-[ferredoxin] + 2 H2O. It functions in the pathway lipid metabolism; polyunsaturated fatty acid biosynthesis. Chloroplast omega-6 fatty acid desaturase introduces the second double bond in the biosynthesis of 16:3 and 18:3 fatty acids, important constituents of plant membranes. It is thought to use ferredoxin as an electron donor and to act on fatty acids esterified to galactolipids, sulfolipids and phosphatidylglycerol. The chain is Omega-6 fatty acid desaturase, chloroplastic from Brassica napus (Rape).